Reading from the N-terminus, the 113-residue chain is uncharacterized protein (113 aa).

The SWIM-type zinc-finger motif lies at 49-91; that stretch reads FFVVVGKEEYVVEGGFCTCPDFLVNLKGKSPCAHIIAVEVAKI.

This is an uncharacterized protein from Archaeoglobus fulgidus (strain ATCC 49558 / DSM 4304 / JCM 9628 / NBRC 100126 / VC-16).